The chain runs to 718 residues: Adhesin-like cell surface protein MAD1 (718 aa).

The first 19 residues, 1-19 (MKGAIQFLGALAAVQAVSA), serve as a signal peptide directing secretion. 9 consecutive repeat copies span residues 217-243 (PCTE…TEPA), 244-265 (PCTE…TEPA), 266-282 (PCTE…TEPA), 283-309 (PCTE…TEPA), 310-336 (PCTE…TEPA), 337-358 (PCTE…TEPA), 359-382 (PCTE…TDEA), 383-402 (PCTD…TDEA), and 403-420 (PCTE…AVPT). The segment at 452 to 472 (TSIPYETPSPSETETLPPSGT) is disordered. One can recognise a CFEM domain in the interval 462–575 (SETETLPPSG…VTLPPVTTGA (114 aa)). 3 disulfides stabilise this stretch: cysteine 494-cysteine 526, cysteine 504-cysteine 512, and cysteine 514-cysteine 548. Aspartate 509 lines the heme pocket. A lipid anchor (GPI-anchor amidated glycine) is attached at glycine 693. A propeptide spans 694–718 (AASSFKAFSTVMLAGVIGLTALIMA) (removed in mature form).

The protein belongs to the RBT5 family. In terms of processing, the GPI-anchor is attached to the protein in the endoplasmic reticulum and serves to target the protein to the cell surface. There, the glucosamine-inositol phospholipid moiety is cleaved off and the GPI-modified mannoprotein is covalently attached via its lipidless GPI glycan remnant to the 1,6-beta-glucan of the outer cell wall layer.

It is found in the secreted. The protein localises to the cell wall. Its subcellular location is the cell membrane. In terms of biological role, cell surface adhesion protein that plays a key role in switching between the saprophytic lifestyle and the predacious lifestyle (nematode trapping). Likely functions to prevent energy-consuming trap formation in the absence of nematodes, and keeps the fungus in the saprophytic life style. May influence the induction signal of trap formation by limiting the porosity of the cell wall and thus affecting its permeability of nitrogen source. This is Adhesin-like cell surface protein MAD1 from Arthrobotrys oligospora (strain ATCC 24927 / CBS 115.81 / DSM 1491) (Nematode-trapping fungus).